The chain runs to 84 residues: Cell division topological specificity factor (84 aa).

The protein belongs to the MinE family.

In terms of biological role, prevents the cell division inhibition by proteins MinC and MinD at internal division sites while permitting inhibition at polar sites. This ensures cell division at the proper site by restricting the formation of a division septum at the midpoint of the long axis of the cell. This is Cell division topological specificity factor from Desulfotalea psychrophila (strain LSv54 / DSM 12343).